We begin with the raw amino-acid sequence, 684 residues long: Methionine--tRNA ligase (684 aa).

A 'HIGH' region motif is present at residues 17–27 (PYANGKAHVGH). The Zn(2+) site is built by Cys148, Cys151, Cys160, and Cys164. The 'KMSKS' region motif lies at 330–334 (TFSKS). An ATP-binding site is contributed by Lys333. The region spanning 582–684 (DFSKLDIRIG…KETNPGTCIH (103 aa)) is the tRNA-binding domain.

This sequence belongs to the class-I aminoacyl-tRNA synthetase family. MetG type 1 subfamily. In terms of assembly, homodimer. Zn(2+) serves as cofactor.

It localises to the cytoplasm. It catalyses the reaction tRNA(Met) + L-methionine + ATP = L-methionyl-tRNA(Met) + AMP + diphosphate. Its function is as follows. Is required not only for elongation of protein synthesis but also for the initiation of all mRNA translation through initiator tRNA(fMet) aminoacylation. The polypeptide is Methionine--tRNA ligase (Methanococcoides burtonii (strain DSM 6242 / NBRC 107633 / OCM 468 / ACE-M)).